Here is a 351-residue protein sequence, read N- to C-terminus: CCN family member 3 (351 aa).

A signal peptide spans 1–24; the sequence is METGGGQGLPVLLLLLLLLRPCEV. Residues 27–101 enclose the IGFBP N-terminal domain; the sequence is REAACPRPCG…GGGAGICMVL (75 aa). 6 disulfides stabilise this stretch: cysteine 31–cysteine 57, cysteine 35–cysteine 59, cysteine 39–cysteine 60, cysteine 46–cysteine 63, cysteine 71–cysteine 85, and cysteine 77–cysteine 98. The region spanning 104–170 is the VWFC domain; that stretch reads DNCVFDGMIY…GECCEKWVCD (67 aa). Residues 201 to 246 enclose the TSP type-1 domain; it reads NCIEQTTEWSACSKSCGMGFSTRVTNRNQQCEMVKQTRLCMMRPCE. Disulfide bonds link cysteine 258–cysteine 295, cysteine 275–cysteine 309, cysteine 286–cysteine 325, cysteine 289–cysteine 327, and cysteine 294–cysteine 331. The 75-residue stretch at 258–332 folds into the CTCK domain; sequence CIQTKKSMKA…NTCVCHGNCP (75 aa). Asparagine 274 carries an N-linked (GlcNAc...) asparagine glycan.

The protein belongs to the CCN family. Brain and heart, and at a lower level in muscle and intestine, in the embryo. Lung and less so in brain and spleen, in adult chicken.

It is found in the secreted. Its subcellular location is the cytoplasm. It localises to the cell junction. The protein resides in the gap junction. In terms of biological role, immediate-early protein likely to play a role in cell growth regulation. Its overexpression is associated with tumorigenesis and expression of a N-terminal-truncated version of CCN3 gene in chicken embryonic fibroblasts (CEF) is sufficient to induce the transformation of CEF in vitro. This chain is CCN family member 3 (CCN3), found in Gallus gallus (Chicken).